An 852-amino-acid chain; its full sequence is Beta-galactosidase 8 (852 aa).

The first 29 residues, 1-29, serve as a signal peptide directing secretion; sequence MEIAAKMVKVRKMEMILLLILVIVVAATA. A glycan (N-linked (GlcNAc...) asparagine) is linked at asparagine 31. The Proton donor role is filled by glutamate 188. Residue glutamate 257 is the Nucleophile of the active site. N-linked (GlcNAc...) asparagine glycans are attached at residues asparagine 258, asparagine 475, asparagine 766, and asparagine 807. The SUEL-type lectin domain occupies 766–852; that stretch reads NRTRPVLSLK…KSLAVEASCS (87 aa).

The protein belongs to the glycosyl hydrolase 35 family. Expressed in roots, flowers and siliques.

It localises to the secreted. The protein resides in the extracellular space. It is found in the apoplast. It catalyses the reaction Hydrolysis of terminal non-reducing beta-D-galactose residues in beta-D-galactosides.. The protein is Beta-galactosidase 8 (BGAL8) of Arabidopsis thaliana (Mouse-ear cress).